The chain runs to 199 residues: MKSVAGIVLAGGMSRRFGEPKALVSWQGYTFIERIVQVMQDVMQDIVVISHASIKERVAHLIEVPVIEDISFYKGEGPLAGIVSGMEHLEAEWYMISPCDTPNISSKWIKQITGQIDDEYEAIIPIVEGRKQPLLGAYHKNVKEKIYKLLDEEKRSMEQLLSHCNVKYVTGDEWNIEKTWFVNVNTKEEYAELLTCKKK.

GTP contacts are provided by residues L9 to G11, K21, D69, and D100. D100 is a Mg(2+) binding site.

This sequence belongs to the MobA family. It depends on Mg(2+) as a cofactor.

The protein localises to the cytoplasm. The enzyme catalyses Mo-molybdopterin + GTP + H(+) = Mo-molybdopterin guanine dinucleotide + diphosphate. Functionally, transfers a GMP moiety from GTP to Mo-molybdopterin (Mo-MPT) cofactor (Moco or molybdenum cofactor) to form Mo-molybdopterin guanine dinucleotide (Mo-MGD) cofactor. The polypeptide is Probable molybdenum cofactor guanylyltransferase (Bacillus cytotoxicus (strain DSM 22905 / CIP 110041 / 391-98 / NVH 391-98)).